Consider the following 149-residue polypeptide: Nucleoside diphosphate kinase (149 aa).

ATP contacts are provided by K9, F57, R85, T91, R102, and N112. Catalysis depends on H115, which acts as the Pros-phosphohistidine intermediate.

This sequence belongs to the NDK family. In terms of assembly, homotetramer. It depends on Mg(2+) as a cofactor.

The protein localises to the cytoplasm. The enzyme catalyses a 2'-deoxyribonucleoside 5'-diphosphate + ATP = a 2'-deoxyribonucleoside 5'-triphosphate + ADP. It carries out the reaction a ribonucleoside 5'-diphosphate + ATP = a ribonucleoside 5'-triphosphate + ADP. Major role in the synthesis of nucleoside triphosphates other than ATP. The ATP gamma phosphate is transferred to the NDP beta phosphate via a ping-pong mechanism, using a phosphorylated active-site intermediate. The sequence is that of Nucleoside diphosphate kinase from Staphylococcus haemolyticus (strain JCSC1435).